We begin with the raw amino-acid sequence, 257 residues long: Diphthine synthase (257 aa).

Residues Leu-9, Asp-85, Val-88, 113–114, Leu-164, Ala-209, and His-234 each bind S-adenosyl-L-methionine; that span reads SI.

It belongs to the diphthine synthase family. In terms of assembly, homodimer.

It carries out the reaction 2-[(3S)-amino-3-carboxypropyl]-L-histidyl-[translation elongation factor 2] + 3 S-adenosyl-L-methionine = diphthine-[translation elongation factor 2] + 3 S-adenosyl-L-homocysteine + 3 H(+). The protein operates within protein modification; peptidyl-diphthamide biosynthesis. Its function is as follows. S-adenosyl-L-methionine-dependent methyltransferase that catalyzes the trimethylation of the amino group of the modified target histidine residue in translation elongation factor 2 (EF-2), to form an intermediate called diphthine. The three successive methylation reactions represent the second step of diphthamide biosynthesis. This chain is Diphthine synthase, found in Methanocaldococcus jannaschii (strain ATCC 43067 / DSM 2661 / JAL-1 / JCM 10045 / NBRC 100440) (Methanococcus jannaschii).